A 151-amino-acid polypeptide reads, in one-letter code: Small ribosomal subunit protein uS15 (151 aa).

Lys-27 is subject to N6-acetyllysine; alternate. Lys-27 bears the N6-succinyllysine; alternate mark. Lys-27 participates in a covalent cross-link: Glycyl lysine isopeptide (Lys-Gly) (interchain with G-Cter in ubiquitin). A Phosphoserine modification is found at Ser-30. Lys-34 bears the N6-succinyllysine mark. Phosphotyrosine is present on Tyr-38. A Glycyl lysine isopeptide (Lys-Gly) (interchain with G-Cter in SUMO2) cross-link involves residue Lys-43.

Belongs to the universal ribosomal protein uS15 family. Component of the small ribosomal subunit. Part of the small subunit (SSU) processome, composed of more than 70 proteins and the RNA chaperone small nucleolar RNA (snoRNA) U3. Ubiquitinated at Lys-27 by RNF14 and RNF25 in response to ribosome collisions (ribosome stalling).

It is found in the cytoplasm. The protein resides in the nucleus. Its subcellular location is the nucleolus. Functionally, component of the small ribosomal subunit. The ribosome is a large ribonucleoprotein complex responsible for the synthesis of proteins in the cell. Part of the small subunit (SSU) processome, first precursor of the small eukaryotic ribosomal subunit. During the assembly of the SSU processome in the nucleolus, many ribosome biogenesis factors, an RNA chaperone and ribosomal proteins associate with the nascent pre-rRNA and work in concert to generate RNA folding, modifications, rearrangements and cleavage as well as targeted degradation of pre-ribosomal RNA by the RNA exosome. This chain is Small ribosomal subunit protein uS15, found in Homo sapiens (Human).